Reading from the N-terminus, the 365-residue chain is Putative DNA-directed RNA polymerase subunit alpha-like 3 (365 aa).

Belongs to the RNA polymerase alpha chain family. As to quaternary structure, in plastids the minimal PEP RNA polymerase catalytic core is composed of four subunits: alpha, beta, beta', and beta''. When a (nuclear-encoded) sigma factor is associated with the core the holoenzyme is formed, which can initiate transcription.

The protein resides in the plastid. It localises to the chloroplast. The enzyme catalyses RNA(n) + a ribonucleoside 5'-triphosphate = RNA(n+1) + diphosphate. In terms of biological role, DNA-dependent RNA polymerase catalyzes the transcription of DNA into RNA using the four ribonucleoside triphosphates as substrates. The polypeptide is Putative DNA-directed RNA polymerase subunit alpha-like 3 (rpoAL3-A) (Pelargonium hortorum (Common geranium)).